The primary structure comprises 394 residues: Acetate kinase (394 aa).

Residue N10 participates in Mg(2+) binding. An ATP-binding site is contributed by K17. Residue R87 participates in substrate binding. Residue D144 is the Proton donor/acceptor of the active site. ATP contacts are provided by residues 204–208, 279–281, and 327–331; these read HLGNG, DMR, and GIGEN. Residue E381 participates in Mg(2+) binding.

It belongs to the acetokinase family. In terms of assembly, homodimer. It depends on Mg(2+) as a cofactor. Mn(2+) serves as cofactor.

It is found in the cytoplasm. The enzyme catalyses acetate + ATP = acetyl phosphate + ADP. It participates in metabolic intermediate biosynthesis; acetyl-CoA biosynthesis; acetyl-CoA from acetate: step 1/2. Catalyzes the formation of acetyl phosphate from acetate and ATP. Can also catalyze the reverse reaction. This is Acetate kinase from Pseudomonas aeruginosa (strain LESB58).